The sequence spans 179 residues: Large ribosomal subunit protein uL5 (179 aa).

The protein belongs to the universal ribosomal protein uL5 family. Part of the 50S ribosomal subunit; part of the 5S rRNA/L5/L18/L25 subcomplex. Contacts the 5S rRNA and the P site tRNA. Forms a bridge to the 30S subunit in the 70S ribosome.

This is one of the proteins that bind and probably mediate the attachment of the 5S RNA into the large ribosomal subunit, where it forms part of the central protuberance. In the 70S ribosome it contacts protein S13 of the 30S subunit (bridge B1b), connecting the 2 subunits; this bridge is implicated in subunit movement. Contacts the P site tRNA; the 5S rRNA and some of its associated proteins might help stabilize positioning of ribosome-bound tRNAs. This is Large ribosomal subunit protein uL5 from Photorhabdus laumondii subsp. laumondii (strain DSM 15139 / CIP 105565 / TT01) (Photorhabdus luminescens subsp. laumondii).